A 237-amino-acid chain; its full sequence is ATP synthase subunit a (237 aa).

The next 6 membrane-spanning stretches (helical) occupy residues 18–38 (STLWMAIGVLMIALLMVVGTL), 77–97 (IFTLFLFILFSNFLGLIPMAF), 103–123 (IAVTGVMAMGVFIGVTALGFM), 132–152 (LFWVSAAPLPLRPILAVIEVI), 185–205 (LILFSFVGVIVTPLSVLAIVA), and 209–229 (LEILVAFVQAYVFTILTCVYL).

The protein belongs to the ATPase A chain family. As to quaternary structure, F-type ATPases have 2 components, CF(1) - the catalytic core - and CF(0) - the membrane proton channel. CF(1) has five subunits: alpha(3), beta(3), gamma(1), delta(1), epsilon(1). CF(0) has three main subunits: a(1), b(2) and c(9-12). The alpha and beta chains form an alternating ring which encloses part of the gamma chain. CF(1) is attached to CF(0) by a central stalk formed by the gamma and epsilon chains, while a peripheral stalk is formed by the delta and b chains.

Its subcellular location is the cellular chromatophore membrane. Key component of the proton channel; it plays a direct role in the translocation of protons across the membrane. In Rhodobacter capsulatus (Rhodopseudomonas capsulata), this protein is ATP synthase subunit a.